Reading from the N-terminus, the 402-residue chain is Beta-ketoacyl-[acyl-carrier-protein] synthase III B, chloroplastic (402 aa).

Catalysis depends on residues Cys178, His328, and Asn358.

It belongs to the thiolase-like superfamily. FabH family.

It localises to the plastid. The protein resides in the chloroplast. The enzyme catalyses malonyl-[ACP] + acetyl-CoA + H(+) = 3-oxobutanoyl-[ACP] + CO2 + CoA. The protein operates within lipid metabolism; fatty acid biosynthesis. Its function is as follows. Catalyzes the condensation reaction of fatty acid synthesis by the addition to an acyl acceptor of two carbons from malonyl-ACP. KAS III catalyzes the first condensation reaction which initiates fatty acid synthesis and may therefore play a role in governing the total rate of fatty acid production. Possesses both acetoacetyl-ACP synthase and acetyl transacylase activities. This chain is Beta-ketoacyl-[acyl-carrier-protein] synthase III B, chloroplastic (KAS3B), found in Cuphea wrightii (Wright's waxweed).